The sequence spans 139 residues: ATP synthase epsilon chain (139 aa).

This sequence belongs to the ATPase epsilon chain family. In terms of assembly, F-type ATPases have 2 components, CF(1) - the catalytic core - and CF(0) - the membrane proton channel. CF(1) has five subunits: alpha(3), beta(3), gamma(1), delta(1), epsilon(1). CF(0) has three main subunits: a, b and c.

The protein localises to the cell inner membrane. Functionally, produces ATP from ADP in the presence of a proton gradient across the membrane. This Alcanivorax borkumensis (strain ATCC 700651 / DSM 11573 / NCIMB 13689 / SK2) protein is ATP synthase epsilon chain.